Consider the following 257-residue polypeptide: Hydroxyacylglutathione hydrolase (257 aa).

Positions 54, 56, 58, 59, 113, 137, and 175 each coordinate Zn(2+).

This sequence belongs to the metallo-beta-lactamase superfamily. Glyoxalase II family. In terms of assembly, monomer. The cofactor is Zn(2+).

The enzyme catalyses an S-(2-hydroxyacyl)glutathione + H2O = a 2-hydroxy carboxylate + glutathione + H(+). The protein operates within secondary metabolite metabolism; methylglyoxal degradation; (R)-lactate from methylglyoxal: step 2/2. Thiolesterase that catalyzes the hydrolysis of S-D-lactoyl-glutathione to form glutathione and D-lactic acid. This Acaryochloris marina (strain MBIC 11017) protein is Hydroxyacylglutathione hydrolase.